The following is an 827-amino-acid chain: Protein Jade-1 (827 aa).

Residues 1-35 are disordered; sequence MKRVCLPSSSEDSDDNGSLSTSWSQHSRSLPSFRH. The segment covering 16 to 30 has biased composition (polar residues); sequence NGSLSTSWSQHSRSL. Residues 200 to 250 form a PHD-type 1 zinc finger; that stretch reads DVVCDVCQSPDGEDGNEMVFCDKCNICVHQACYGILKVPEGSWLCRTCALG. The C2HC pre-PHD-type zinc finger occupies 252-286; that stretch reads QPKCLLCPKKGGAMKPTRSGTKWVHVSCALWIPEV. The PHD-type 2 zinc finger occupies 310–366; sequence LLCSLCNEKVGACIQCSIKNCRTAFHVTCAFDHGLEMKTILTQEDEVKFKSYCPKHG. Disordered regions lie at residues 622 to 705 and 769 to 810; these read TVAK…SSSL and RTKE…SSSS. 2 stretches are compositionally biased toward basic and acidic residues: residues 646–661 and 669–682; these read SRTQ…EKPL and KHTE…EKKR. Over residues 692–705 the composition is skewed to polar residues; sequence ATASSNKKQCSSSL.

Belongs to the JADE family. As to quaternary structure, component of the HBO1 complex composed.

Its subcellular location is the nucleus. It is found in the chromosome. It localises to the cytoplasm. The protein resides in the cytoskeleton. The protein localises to the cilium basal body. Scaffold subunit of some HBO1 complexes, which have a histone H4 acetyltransferase activity. Plays a key role in HBO1 complex by directing KAT7/HBO1 specificity towards histone H4 acetylation (H4K5ac, H4K8ac and H4K12ac), regulating DNA replication initiation, regulating DNA replication initiation. This Xenopus laevis (African clawed frog) protein is Protein Jade-1 (jade1).